A 347-amino-acid chain; its full sequence is Cyclic AMP-dependent transcription factor ATF-4 (347 aa).

Positions 202 to 296 (TPQCVKEEDT…AATRYRQKKR (95 aa)) are disordered. Thr-211 is modified (phosphothreonine). Phosphoserine is present on residues Ser-213, Ser-217, Ser-222, Ser-229, and Ser-233. Residues 213–222 (SDSDSGICMS) carry the BetaTrCP degron motif motif. The span at 228-238 (GSPQHSPSTSR) shows a compositional bias: polar residues. Residue Pro-234 is modified to 4-hydroxyproline. Phosphoserine is present on residues Ser-243 and Ser-246. Glycyl lysine isopeptide (Lys-Gly) (interchain with G-Cter in SUMO2) cross-links involve residues Lys-256 and Lys-268. Basic and acidic residues predominate over residues 269–283 (VKTEKLDKKLKKMEQ). The 64-residue stretch at 274–337 (LDKKLKKMEQ…QYLKDLIEEV (64 aa)) folds into the bZIP domain. Residues 276–296 (KKLKKMEQNKTAATRYRQKKR) form a basic motif region. The interaction with GABBR1 stretch occupies residues 301–337 (ALTGECKELEKKNEALKEKADSLAKEIQYLKDLIEEV). The leucine-zipper stretch occupies residues 302–330 (LTGECKELEKKNEALKEKADSLAKEIQYL). Position 307 is an N6-acetyllysine (Lys-307).

Belongs to the bZIP family. In terms of assembly, binds DNA as a homodimer and as a heterodimer. Heterodimer; heterodimerizes with CEBPB. Heterodimer; heterodimerizes with DDIT3/CHOP. Interacts with CEP290 (via an N-terminal region). Interacts with NEK6, DAPK2 (isoform 2) and ZIPK/DAPK3. Interacts (via its leucine zipper domain) with GABBR1 and GABBR2 (via their C-termini). Forms a heterodimer with TXLNG in osteoblasts. Interacts (via its DNA binding domain) with FOXO1 (C-terminal half); the interaction occurs in osteoblasts and regulates glucose homeostasis through suppression of beta-cell proliferation and a decrease in insulin production. Interacts with SATB2; the interaction results in enhanced DNA binding and transactivation by these transcription factors. Interacts with ABRAXAS2. Interacts with TRIB3, inhibiting the transactivation activity of ATF4. Interacts with DISC1; which inhibits ATF4 transcription factor activity by disrupting ATF4 dimerization and DNA-binding. Interacts with EP300/p300; EP300/p300 stabilizes ATF4 and increases its transcriptional activity independently of its catalytic activity by preventing its ubiquitination. Ubiquitinated by SCF(BTRC) in response to mTORC1 signal, followed by proteasomal degradation and leading to down-regulate expression of SIRT4. Interaction with EP300/p300 inhibits ubiquitination by SCF(BTRC). In terms of processing, phosphorylation at Ser-243 by RPS6KA3/RSK2 in osteoblasts enhances transactivation activity and promotes osteoblast differentiation. Phosphorylated on the betaTrCP degron motif at Ser-217, followed by phosphorylation at Thr-211, Ser-222, Ser-229, Ser-233 and Ser-246, promoting interaction with BTRC and ubiquitination. Phosphorylation is promoted by mTORC1. Phosphorylation at Ser-213 by CK2 decreases its stability. Phosphorylated by NEK6. Post-translationally, hydroxylated by PHD3, leading to decreased protein stability. As to expression, expressed in brain, heart, liver, spleen, lung and muscle, but not testis.

Its subcellular location is the nucleus. The protein resides in the nucleus speckle. It is found in the cytoplasm. The protein localises to the cell membrane. It localises to the cytoskeleton. Its subcellular location is the microtubule organizing center. The protein resides in the centrosome. Functionally, transcription factor that binds the cAMP response element (CRE) (consensus: 5'-GTGACGT[AC][AG]-3') and displays two biological functions, as regulator of metabolic and redox processes under normal cellular conditions, and as master transcription factor during integrated stress response (ISR). Binds to asymmetric CRE's as a heterodimer and to palindromic CRE's as a homodimer. Core effector of the ISR, which is required for adaptation to various stress such as endoplasmic reticulum (ER) stress, amino acid starvation, mitochondrial stress or oxidative stress. During ISR, ATF4 translation is induced via an alternative ribosome translation re-initiation mechanism in response to EIF2S1/eIF-2-alpha phosphorylation, and stress-induced ATF4 acts as a master transcription factor of stress-responsive genes in order to promote cell recovery. Promotes the transcription of genes linked to amino acid sufficiency and resistance to oxidative stress to protect cells against metabolic consequences of ER oxidation. Activates the transcription of NLRP1, possibly in concert with other factors in response to ER stress. Activates the transcription of asparagine synthetase (ASNS) in response to amino acid deprivation or ER stress. However, when associated with DDIT3/CHOP, the transcriptional activation of the ASNS gene is inhibited in response to amino acid deprivation. Together with DDIT3/CHOP, mediates programmed cell death by promoting the expression of genes involved in cellular amino acid metabolic processes, mRNA translation and the terminal unfolded protein response (terminal UPR), a cellular response that elicits programmed cell death when ER stress is prolonged and unresolved. Activates the expression of COX7A2L/SCAF1 downstream of the EIF2AK3/PERK-mediated unfolded protein response, thereby promoting formation of respiratory chain supercomplexes and increasing mitochondrial oxidative phosphorylation. Together with DDIT3/CHOP, activates the transcription of the IRS-regulator TRIB3 and promotes ER stress-induced neuronal cell death by regulating the expression of BBC3/PUMA in response to ER stress. May cooperate with the UPR transcriptional regulator QRICH1 to regulate ER protein homeostasis which is critical for cell viability in response to ER stress. In the absence of stress, ATF4 translation is at low levels and it is required for normal metabolic processes such as embryonic lens formation, fetal liver hematopoiesis, bone development and synaptic plasticity. Acts as a regulator of osteoblast differentiation in response to phosphorylation by RPS6KA3/RSK2: phosphorylation in osteoblasts enhances transactivation activity and promotes expression of osteoblast-specific genes and post-transcriptionally regulates the synthesis of Type I collagen, the main constituent of the bone matrix. Cooperates with FOXO1 in osteoblasts to regulate glucose homeostasis through suppression of beta-cell production and decrease in insulin production. Activates transcription of SIRT4. Regulates the circadian expression of the core clock component PER2 and the serotonin transporter SLC6A4. Binds in a circadian time-dependent manner to the cAMP response elements (CRE) in the SLC6A4 and PER2 promoters and periodically activates the transcription of these genes. Mainly acts as a transcriptional activator in cellular stress adaptation, but it can also act as a transcriptional repressor: acts as a regulator of synaptic plasticity by repressing transcription, thereby inhibiting induction and maintenance of long-term memory. Regulates synaptic functions via interaction with DISC1 in neurons, which inhibits ATF4 transcription factor activity by disrupting ATF4 dimerization and DNA-binding. The polypeptide is Cyclic AMP-dependent transcription factor ATF-4 (Rattus norvegicus (Rat)).